A 374-amino-acid chain; its full sequence is UDP-N-acetylglucosamine--N-acetylmuramyl-(pentapeptide) pyrophosphoryl-undecaprenol N-acetylglucosamine transferase (374 aa).

Residues 14–16 (TGG), N125, R168, S196, and Q297 each bind UDP-N-acetyl-alpha-D-glucosamine.

The protein belongs to the glycosyltransferase 28 family. MurG subfamily.

Its subcellular location is the cell inner membrane. The catalysed reaction is di-trans,octa-cis-undecaprenyl diphospho-N-acetyl-alpha-D-muramoyl-L-alanyl-D-glutamyl-meso-2,6-diaminopimeloyl-D-alanyl-D-alanine + UDP-N-acetyl-alpha-D-glucosamine = di-trans,octa-cis-undecaprenyl diphospho-[N-acetyl-alpha-D-glucosaminyl-(1-&gt;4)]-N-acetyl-alpha-D-muramoyl-L-alanyl-D-glutamyl-meso-2,6-diaminopimeloyl-D-alanyl-D-alanine + UDP + H(+). It functions in the pathway cell wall biogenesis; peptidoglycan biosynthesis. Functionally, cell wall formation. Catalyzes the transfer of a GlcNAc subunit on undecaprenyl-pyrophosphoryl-MurNAc-pentapeptide (lipid intermediate I) to form undecaprenyl-pyrophosphoryl-MurNAc-(pentapeptide)GlcNAc (lipid intermediate II). This chain is UDP-N-acetylglucosamine--N-acetylmuramyl-(pentapeptide) pyrophosphoryl-undecaprenol N-acetylglucosamine transferase, found in Rhodopseudomonas palustris (strain BisA53).